A 525-amino-acid chain; its full sequence is MTRDIHDHRILILDFGSQYTQLIARRIREIGVYCELWAWDVDEADIREFAPKGIILSGGPESVAEEGSPRAPEYVFNAGVPVFGICYGMQTMAHQLGGSVQCSLEREFGYAQIELVEQSPLFKAIEDAVSESGAPLLDVWMSHGDKVEMIPEGFHTVAKTSYCPYAAMADEERQFYGVQFHPEVTHTRQGQRMLEHFVSDICGCEKQWTPAKIIDDAIERIREQVGSDKVILGLSGGVDSSVTAMLLHRAIGEQLTCVFVDNGLLRLNEAEQVMEMFGDHYGLNILPIRAEDRFLDALAGENDPEKKRKIIGNTFIEIFDEEAGKLTEVDWLAQGTIYPDVIESAGSKTGKAHVIKSHHNVGGLPEDMKLGLVEPLRELFKDEVRKIGLELGLPYNMLYRHPFPGPGLGVRVLGEIKKEYCDLLRRADAIFIEELHNADWYNKVSQAFAVFLPVRSVGVMGDQRKYDWVIAIRAVETIDFMTARWAHLPYELLEKVSNRIINEVNGISRVTYDISGKPPATIEWE.

The Glutamine amidotransferase type-1 domain occupies 9 to 207 (RILILDFGSQ…VSDICGCEKQ (199 aa)). The Nucleophile role is filled by Cys86. Active-site residues include His181 and Glu183. Residues 208-400 (WTPAKIIDDA…LGLPYNMLYR (193 aa)) enclose the GMPS ATP-PPase domain. 235–241 (SGGVDSS) serves as a coordination point for ATP.

Homodimer.

It carries out the reaction XMP + L-glutamine + ATP + H2O = GMP + L-glutamate + AMP + diphosphate + 2 H(+). It participates in purine metabolism; GMP biosynthesis; GMP from XMP (L-Gln route): step 1/1. In terms of biological role, catalyzes the synthesis of GMP from XMP. In Idiomarina loihiensis (strain ATCC BAA-735 / DSM 15497 / L2-TR), this protein is GMP synthase [glutamine-hydrolyzing].